The following is an 842-amino-acid chain: Oligopeptide transporter phomP2' (842 aa).

Residues 1–58 (MEADPKVPFTDEMNIQDEHNWESGSWSSSRRSNDSNVTLLSRRSSVEQHEDERQKDSD) are disordered. Over residues 23–36 (SGSWSSSRRSNDSN) the composition is skewed to low complexity. Residues Asn33 and Asn36 are each glycosylated (N-linked (GlcNAc...) asparagine). Positions 44-58 (SSVEQHEDERQKDSD) are enriched in basic and acidic residues. 6 consecutive transmembrane segments (helical) span residues 105–125 (VWLLSTFWVLAGCSISTVYYF), 177–197 (ALVVIAYWGSSYTAYGLGPLS), 210–230 (PWAITFLVTTQLTGYGLVGLY), 268–288 (VFMAIASAAFVYQWLPSFVFP), 315–335 (GFGLMDFSLDWNYVAFLSPLF), and 345–365 (FVGAALAVWITYPVAYFSDAL). N-linked (GlcNAc...) asparagine glycosylation is found at Asn386 and Asn398. 4 helical membrane passes run 415–435 (AMHFFWGFASASAIVTYAVLF), 478–498 (AWYALLLAVCLCLGTIQLYAG), 505–525 (WGLQLVVAISALFTLPCGMLF), and 585–605 (WELLVAQVYGTLLGPFVNWAV). A compositionally biased stretch (gly residues) spans 629–649 (QGLGLGQGGGGGGGGGGGGGQ). Positions 629 to 657 (QGLGLGQGGGGGGGGGGGGGQQQRAAGAH) are disordered. The next 3 membrane-spanning stretches (helical) occupy residues 668 to 688 (NFFSSSVIWGVMGPARVFGGG), 700 to 720 (WLLPSGFAVGAAAVLLLWLIH), and 731 to 751 (WPLHPAIIFHGASLFPVFPTT). An N-linked (GlcNAc...) asparagine glycan is attached at Asn752. Residues 784-804 (AGLDCGAQLVQMVLGLAFLVF) traverse the membrane as a helical segment.

This sequence belongs to the oligopeptide OPT transporter family.

The protein localises to the membrane. Oligopeptide transporter; part of the gene cluster that mediates the biosynthesis of the phomopsins, a group of hexapeptide mycotoxins which infects lupins and causes lupinosis disease in livestock. The sequence is that of Oligopeptide transporter phomP2' from Diaporthe leptostromiformis (Lupinosis disease fungus).